Here is a 151-residue protein sequence, read N- to C-terminus: Peptide deformylase (151 aa).

Cysteine 88 and histidine 130 together coordinate Fe cation. Glutamate 131 is a catalytic residue. Histidine 134 is a binding site for Fe cation.

This sequence belongs to the polypeptide deformylase family. It depends on Fe(2+) as a cofactor.

It carries out the reaction N-terminal N-formyl-L-methionyl-[peptide] + H2O = N-terminal L-methionyl-[peptide] + formate. Its function is as follows. Removes the formyl group from the N-terminal Met of newly synthesized proteins. Requires at least a dipeptide for an efficient rate of reaction. N-terminal L-methionine is a prerequisite for activity but the enzyme has broad specificity at other positions. This chain is Peptide deformylase, found in Heliobacterium modesticaldum (strain ATCC 51547 / Ice1).